We begin with the raw amino-acid sequence, 283 residues long: Polyamine aminopropyltransferase (283 aa).

Residues 5 to 238 enclose the PABS domain; it reads QTWIDEYHKG…GIWSWTFASS (234 aa). Gln-32 lines the S-methyl-5'-thioadenosine pocket. Spermidine is bound by residues His-63 and Asp-87. Residues Glu-107 and 139-140 each bind S-methyl-5'-thioadenosine; that span reads DG. Asp-158 serves as the catalytic Proton acceptor. Residue 158 to 161 coordinates spermidine; the sequence is DCSD.

It belongs to the spermidine/spermine synthase family. In terms of assembly, homodimer or homotetramer.

It localises to the cytoplasm. The catalysed reaction is S-adenosyl 3-(methylsulfanyl)propylamine + putrescine = S-methyl-5'-thioadenosine + spermidine + H(+). It functions in the pathway amine and polyamine biosynthesis; spermidine biosynthesis; spermidine from putrescine: step 1/1. In terms of biological role, catalyzes the irreversible transfer of a propylamine group from the amino donor S-adenosylmethioninamine (decarboxy-AdoMet) to putrescine (1,4-diaminobutane) to yield spermidine. This is Polyamine aminopropyltransferase from Prochlorococcus marinus (strain MIT 9301).